Consider the following 205-residue polypeptide: Guanylate kinase (205 aa).

A Guanylate kinase-like domain is found at 18-196 (PKLFIISAPA…AYQVLRSIFI (179 aa)). 25-32 (APAGAGKT) is a binding site for ATP.

This sequence belongs to the guanylate kinase family.

It localises to the cytoplasm. It carries out the reaction GMP + ATP = GDP + ADP. Functionally, essential for recycling GMP and indirectly, cGMP. The chain is Guanylate kinase (gmk) from Chlamydia trachomatis serovar D (strain ATCC VR-885 / DSM 19411 / UW-3/Cx).